The primary structure comprises 391 residues: Succinyl-diaminopimelate desuccinylase (391 aa).

His-67 lines the Zn(2+) pocket. Asp-69 is a catalytic residue. Asp-101 is a Zn(2+) binding site. Catalysis depends on Glu-135, which acts as the Proton acceptor. The Zn(2+) site is built by Glu-136, Glu-164, and His-353.

The protein belongs to the peptidase M20A family. DapE subfamily. In terms of assembly, homodimer. Zn(2+) serves as cofactor. Requires Co(2+) as cofactor.

It carries out the reaction N-succinyl-(2S,6S)-2,6-diaminopimelate + H2O = (2S,6S)-2,6-diaminopimelate + succinate. Its pathway is amino-acid biosynthesis; L-lysine biosynthesis via DAP pathway; LL-2,6-diaminopimelate from (S)-tetrahydrodipicolinate (succinylase route): step 3/3. In terms of biological role, catalyzes the hydrolysis of N-succinyl-L,L-diaminopimelic acid (SDAP), forming succinate and LL-2,6-diaminopimelate (DAP), an intermediate involved in the bacterial biosynthesis of lysine and meso-diaminopimelic acid, an essential component of bacterial cell walls. This Rickettsia bellii (strain RML369-C) protein is Succinyl-diaminopimelate desuccinylase.